Here is a 346-residue protein sequence, read N- to C-terminus: Melatonin receptor type 1C (346 aa).

Residues 1–26 (MERPGSNGSCSGCRLEGGPAARAASG) are Extracellular-facing. Asparagine 7 carries an N-linked (GlcNAc...) asparagine glycan. Residues 27 to 47 (LAAVLIVTIVVDVLGNALVIL) traverse the membrane as a helical segment. Residues 48-60 (SVLRNKKLRNAGN) lie on the Cytoplasmic side of the membrane. A helical membrane pass occupies residues 61–81 (IFVVSLSVADLVVAVYPYPLI). The Extracellular portion of the chain corresponds to 82 to 99 (LSAIFHNGWTMGNIHCQI). Residues cysteine 97 and cysteine 174 are joined by a disulfide bond. Residues 100–120 (SGFLMGLSVIGSIFNITAIAI) traverse the membrane as a helical segment. Residues 121–139 (NRYCYICHSLRYDKLFNLK) lie on the Cytoplasmic side of the membrane. Residues 140–160 (NTCCYICLTWTLTVVAIVPNF) traverse the membrane as a helical segment. The Extracellular segment spans residues 161–184 (FVGSLQYDPRIYSCTFAQTVSTSY). A helical membrane pass occupies residues 185-205 (TITVVVVHFIVPLSIVTFCYL). Topologically, residues 206–237 (RIWILVIQVKHRVRQDCKQKIRAADIRNFLTM) are cytoplasmic. A helical membrane pass occupies residues 238-258 (FVVFVLFAVCWGPLNFIGLAV). At 259–271 (SINPSKVQPHIPE) the chain is on the extracellular side. A helical transmembrane segment spans residues 272-292 (WLFVLSYFMAYFNSCLNAVIY). Residues 293-346 (GLLNQNFRKEYKRILLMLRTPRLLFIDVSKGGTEGLKSKPSPAVTNNNQAEIHL) are Cytoplasmic-facing. Residues 326–346 (EGLKSKPSPAVTNNNQAEIHL) form a disordered region. The segment covering 335-346 (AVTNNNQAEIHL) has biased composition (polar residues).

The protein belongs to the G-protein coupled receptor 1 family. As to expression, expressed in optic tectum, neostriatum, hypothalamus, thalamus and pineal gland, less in cerebellum and retina.

It is found in the cell membrane. High affinity receptor for melatonin. The activity of this receptor is mediated by pertussis toxin sensitive G proteins that inhibits adenylate cyclase activity. In Gallus gallus (Chicken), this protein is Melatonin receptor type 1C.